The following is a 586-amino-acid chain: Guanylate-binding protein 5 (586 aa).

The tract at residues 1-306 (MALEIHMSDP…TYVNAISSGD (306 aa)) is NLRP3-binding. The interval 1 to 309 (MALEIHMSDP…NAISSGDLPC (309 aa)) is GTPase domain (Globular). Residues 35-276 (TQPVVVVAIV…FCSYIFSHSM (242 aa)) enclose the GB1/RHD3-type G domain. GTP contacts are provided by residues 45–52 (GLYRTGKS), 67–69 (VAS), 181–182 (RD), and L245. Residues 529–586 (MEIAKQNWLAEQQKMQEQQMQEQAAQLSTTFQAQNRSLLSELQHAQRTVNNDDPCVLL) form a required for tetramerization, but not for dimerization region. C583 bears the Cysteine methyl ester mark. C583 carries the S-geranylgeranyl cysteine lipid modification. Residues 584-586 (VLL) constitute a propeptide, removed in mature form.

The protein belongs to the TRAFAC class dynamin-like GTPase superfamily. GB1/RHD3 GTPase family. GB1 subfamily. As to quaternary structure, homodimer; homodimerizes upon GTP-binding, forming a close face-to-face dimer. Heterodimer with other family members, including GBP1, GBP2, GBP3 and GBP4. May also form tetramers (dimer of dimers) in the presence of GTP. Interacts with NLRP3, possibly in its tetrameric form, and promotes PYCARD/ASC polymerization. In terms of assembly, homodimer; homodimerizes upon GTP-binding. GDP-bound form remains homodimeric. Homodimer; homodimerizes upon GTP-binding. GDP-bound is monomeric. In terms of processing, isoprenylation is required for proper subcellular location. Expressed in peripheral blood monocytes (at protein level).

It is found in the cytoplasmic vesicle membrane. It localises to the golgi apparatus membrane. Its subcellular location is the cytoplasm. It carries out the reaction GTP + H2O = GDP + phosphate + H(+). In terms of biological role, interferon (IFN)-inducible GTPase that plays important roles in innate immunity against a diverse range of bacterial, viral and protozoan pathogens. Hydrolyzes GTP, but in contrast to other family members, does not produce GMP. Following infection, recruited to the pathogen-containing vacuoles or vacuole-escaped bacteria and acts as a positive regulator of inflammasome assembly by promoting the release of inflammasome ligands from bacteria. Acts by promoting lysis of pathogen-containing vacuoles, releasing pathogens into the cytosol. Following pathogen release in the cytosol, promotes recruitment of proteins that mediate bacterial cytolysis: this liberates ligands that are detected by inflammasomes, such as lipopolysaccharide (LPS) that activates the non-canonical CASP4/CASP11 inflammasome or double-stranded DNA (dsDNA) that activates the AIM2 inflammasome. As an activator of NLRP3 inflammasome assembly: promotes selective NLRP3 inflammasome assembly in response to microbial and soluble, but not crystalline, agents. Independently of its GTPase activity, acts as an inhibitor of various viruses infectivity, such as HIV-1, Zika and influenza A viruses, by inhibiting FURIN-mediated maturation of viral envelope proteins. Its function is as follows. Antigenic tumor-specific truncated splice form. In Homo sapiens (Human), this protein is Guanylate-binding protein 5.